The following is a 309-amino-acid chain: Glutaminase (309 aa).

Substrate contacts are provided by Ser64, Asn114, Glu160, Asn167, Tyr191, Tyr243, and Val261.

It belongs to the glutaminase family. Homotetramer.

The enzyme catalyses L-glutamine + H2O = L-glutamate + NH4(+). This is Glutaminase from Methylobacterium nodulans (strain LMG 21967 / CNCM I-2342 / ORS 2060).